Here is a 310-residue protein sequence, read N- to C-terminus: Cytochrome f (310 aa).

An N-terminal signal peptide occupies residues Met-1–Ala-23. Heme contacts are provided by Tyr-28, Cys-48, Cys-51, and His-52. Residues Ile-277–Lys-297 form a helical membrane-spanning segment.

This sequence belongs to the cytochrome f family. As to quaternary structure, the 4 large subunits of the cytochrome b6-f complex are cytochrome b6, subunit IV (17 kDa polypeptide, PetD), cytochrome f and the Rieske protein, while the 4 small subunits are PetG, PetL, PetM and PetN. The complex functions as a dimer. Heme is required as a cofactor.

Its subcellular location is the cellular thylakoid membrane. In terms of biological role, component of the cytochrome b6-f complex, which mediates electron transfer between photosystem II (PSII) and photosystem I (PSI), cyclic electron flow around PSI, and state transitions. In Prochlorococcus marinus (strain MIT 9313), this protein is Cytochrome f.